We begin with the raw amino-acid sequence, 160 residues long: SsrA-binding protein (160 aa).

Positions 134 to 160 are disordered; sequence RKAHDKREAVKERDWNRDKARLMRDRG. Over residues 138-160 the composition is skewed to basic and acidic residues; the sequence is DKREAVKERDWNRDKARLMRDRG.

The protein belongs to the SmpB family.

It localises to the cytoplasm. Functionally, required for rescue of stalled ribosomes mediated by trans-translation. Binds to transfer-messenger RNA (tmRNA), required for stable association of tmRNA with ribosomes. tmRNA and SmpB together mimic tRNA shape, replacing the anticodon stem-loop with SmpB. tmRNA is encoded by the ssrA gene; the 2 termini fold to resemble tRNA(Ala) and it encodes a 'tag peptide', a short internal open reading frame. During trans-translation Ala-aminoacylated tmRNA acts like a tRNA, entering the A-site of stalled ribosomes, displacing the stalled mRNA. The ribosome then switches to translate the ORF on the tmRNA; the nascent peptide is terminated with the 'tag peptide' encoded by the tmRNA and targeted for degradation. The ribosome is freed to recommence translation, which seems to be the essential function of trans-translation. This Azorhizobium caulinodans (strain ATCC 43989 / DSM 5975 / JCM 20966 / LMG 6465 / NBRC 14845 / NCIMB 13405 / ORS 571) protein is SsrA-binding protein.